The sequence spans 217 residues: uncharacterized protein (217 aa).

This is an uncharacterized protein from Methanocaldococcus jannaschii (strain ATCC 43067 / DSM 2661 / JAL-1 / JCM 10045 / NBRC 100440) (Methanococcus jannaschii).